A 345-amino-acid polypeptide reads, in one-letter code: MSDLRVAVLGVGVMGADHVERLSTRIAGVKVAVVNDFIETRAEEIAAGVPGCRVVSDPLEAIADPDVDAVVLATPGPTHDKQLLACLEQRKPVLCEKPLTTDVDSALDVVRREAELGVRLIQVGFMRRFDPEYAELKTLIDAGEFGQPLVLHCVHRNAAVPPSFDSTMIVKDSLVHEVDVTRFLFDEEIASVHILRPTPNPGAPEGIQDPQIAIMKTPSGKHVDVELFVTTGVGYEVRTELVAEKGTAMIGLDVGLIRKGVPGTWGGAIAPDFRVRFGTAYDIEFQRWVAAVRHGIATGSDDYTDGPTAWDGYAAAAVCAAGVESLAGGQPVEVKMVERASINGA.

Belongs to the Gfo/Idh/MocA family. In terms of assembly, homotetramer.

The enzyme catalyses myo-inositol + NAD(+) = scyllo-inosose + NADH + H(+). Functionally, involved in the oxidation of myo-inositol (MI) to 2-keto-myo-inositol (2KMI or 2-inosose). The polypeptide is Inositol 2-dehydrogenase (Mycolicibacterium smegmatis (strain ATCC 700084 / mc(2)155) (Mycobacterium smegmatis)).